A 114-amino-acid chain; its full sequence is ATP synthase subunit beta, mitochondrial (114 aa).

44–51 (GGAGVGKT) is an ATP binding site.

The protein belongs to the ATPase alpha/beta chains family. As to quaternary structure, F-type ATPases have 2 components, CF(1) - the catalytic core - and CF(0) - the membrane proton channel. CF(1) has five subunits: alpha(3), beta(3), gamma(1), delta(1), epsilon(1). CF(0) has three main subunits: a, b and c.

Its subcellular location is the mitochondrion. It localises to the mitochondrion inner membrane. It carries out the reaction ATP + H2O + 4 H(+)(in) = ADP + phosphate + 5 H(+)(out). In terms of biological role, mitochondrial membrane ATP synthase (F(1)F(0) ATP synthase or Complex V) produces ATP from ADP in the presence of a proton gradient across the membrane which is generated by electron transport complexes of the respiratory chain. F-type ATPases consist of two structural domains, F(1) - containing the extramembraneous catalytic core, and F(0) - containing the membrane proton channel, linked together by a central stalk and a peripheral stalk. During catalysis, ATP synthesis in the catalytic domain of F(1) is coupled via a rotary mechanism of the central stalk subunits to proton translocation. Subunits alpha and beta form the catalytic core in F(1). Rotation of the central stalk against the surrounding alpha(3)beta(3) subunits leads to hydrolysis of ATP in three separate catalytic sites on the beta subunits. This chain is ATP synthase subunit beta, mitochondrial (atp2), found in Penicillium glabrum (Penicillium frequentans).